The sequence spans 457 residues: MGVIDVLAAVGERFPAVRKPERKPTLYRRLAWTGVILVLYFIMSNIPLYGIPPQNIGGQVDLQRIIFASSAGTLMELGIGPIVTASLIIQVLVGAKIIKLDLADPEGRRKFTSAQKVLALAFAALEAVAFTVGGRYWVGTAIEPGPLDYALVSLQLFLGALLVIYFDEVMQKGWGIGSAISLFILAGVAQGVVWSIFGTIPGVAQDYGLVPAIISNPDLTLLARPNGFPDLTGFFTTLAAIILLVYLQAMRVEIPITSERFKGIRSRVPLQFIYVTNIPILLVGILVSDLLLVQRLLADYLGVESRAYQIYSSIVYYLSPPRGVVQSIADPVKTAVFIASWTVLSIVFGYMWVEIAGLNPREQAERLIKGGLAIPGMRSDPRVLERVLRRYIYPLTFLSSLIVAALVIVADIFGAYGTGTGLLLAVGIINQYYAMITRERALETYPLLRRILGEEVV.

The Cytoplasmic portion of the chain corresponds to 1-20 (MGVIDVLAAVGERFPAVRKP). Residues 21–47 (ERKPTLYRRLAWTGVILVLYFIMSNIP) traverse the membrane as a helical segment. Residues 48–59 (LYGIPPQNIGGQ) lie on the Extracellular side of the membrane. An intramembrane region (helical) is located at residues 60 to 67 (VDLQRIIF). A discontinuously helical membrane pass occupies residues 60–88 (VDLQRIIFASSAGTLMELGIGPIVTASLI). An intramembrane segment occupies 68–79 (ASSAGTLMELGI). Positions 80–88 (GPIVTASLI) form an intramembrane region, helical. The Cytoplasmic portion of the chain corresponds to 89 to 109 (IQVLVGAKIIKLDLADPEGRR). The chain crosses the membrane as a helical span at residues 110–134 (KFTSAQKVLALAFAALEAVAFTVGG). The Extracellular portion of the chain corresponds to 135–146 (RYWVGTAIEPGP). Residues 147 to 171 (LDYALVSLQLFLGALLVIYFDEVMQ) form a helical membrane-spanning segment. Topologically, residues 172 to 178 (KGWGIGS) are cytoplasmic. A helical membrane pass occupies residues 179 to 197 (AISLFILAGVAQGVVWSIF). Topologically, residues 198–229 (GTIPGVAQDYGLVPAIISNPDLTLLARPNGFP) are extracellular. Residues 230 to 251 (DLTGFFTTLAAIILLVYLQAMR) traverse the membrane as a helical segment. Topologically, residues 252–276 (VEIPITSERFKGIRSRVPLQFIYVT) are cytoplasmic. The chain crosses the membrane as a helical span at residues 277 to 298 (NIPILLVGILVSDLLLVQRLLA). The Extracellular portion of the chain corresponds to 299–332 (DYLGVESRAYQIYSSIVYYLSPPRGVVQSIADPV). A helical membrane pass occupies residues 333–352 (KTAVFIASWTVLSIVFGYMW). Topologically, residues 353-395 (VEIAGLNPREQAERLIKGGLAIPGMRSDPRVLERVLRRYIYPL) are cytoplasmic. Residues 396–414 (TFLSSLIVAALVIVADIFG) form a helical membrane-spanning segment. At 415–417 (AYG) the chain is on the extracellular side. A helical membrane pass occupies residues 418–432 (TGTGLLLAVGIINQY). Residues 433-457 (YAMITRERALETYPLLRRILGEEVV) are Cytoplasmic-facing.

It belongs to the SecY/SEC61-alpha family. Component of the Sec protein translocase complex. Heterotrimer consisting of alpha (SecY), beta (SecG) and gamma (SecE) subunits. The heterotrimers can form oligomers, although 1 heterotrimer is thought to be able to translocate proteins. Interacts with the ribosome. May interact with SecDF, and other proteins may be involved.

Its subcellular location is the cell membrane. Functionally, the central subunit of the protein translocation channel SecYEG. Consists of two halves formed by TMs 1-5 and 6-10. These two domains form a lateral gate at the front which open onto the bilayer between TMs 2 and 7, and are clamped together by SecE at the back. The channel is closed by both a pore ring composed of hydrophobic SecY resides and a short helix (helix 2A) on the extracellular side of the membrane which forms a plug. The plug probably moves laterally to allow the channel to open. The ring and the pore may move independently. This Aeropyrum pernix (strain ATCC 700893 / DSM 11879 / JCM 9820 / NBRC 100138 / K1) protein is Protein translocase subunit SecY.